A 172-amino-acid polypeptide reads, in one-letter code: Adenine phosphoribosyltransferase (172 aa).

It belongs to the purine/pyrimidine phosphoribosyltransferase family. Homodimer.

It localises to the cytoplasm. The enzyme catalyses AMP + diphosphate = 5-phospho-alpha-D-ribose 1-diphosphate + adenine. Its pathway is purine metabolism; AMP biosynthesis via salvage pathway; AMP from adenine: step 1/1. Functionally, catalyzes a salvage reaction resulting in the formation of AMP, that is energically less costly than de novo synthesis. The protein is Adenine phosphoribosyltransferase of Prochlorococcus marinus (strain MIT 9313).